A 341-amino-acid chain; its full sequence is Methionine import ATP-binding protein MetN 2 (341 aa).

Residues 2–241 form the ABC transporter domain; that stretch reads INLQNVSKIY…PKEEMTKRFV (240 aa). 38-45 is an ATP binding site; the sequence is GYSGAGKS.

Belongs to the ABC transporter superfamily. Methionine importer (TC 3.A.1.24) family. As to quaternary structure, the complex is composed of two ATP-binding proteins (MetN), two transmembrane proteins (MetI) and a solute-binding protein (MetQ).

Its subcellular location is the cell membrane. It carries out the reaction L-methionine(out) + ATP + H2O = L-methionine(in) + ADP + phosphate + H(+). The enzyme catalyses D-methionine(out) + ATP + H2O = D-methionine(in) + ADP + phosphate + H(+). In terms of biological role, part of the ABC transporter complex MetNIQ involved in methionine import. Responsible for energy coupling to the transport system. This chain is Methionine import ATP-binding protein MetN 2, found in Bacillus licheniformis (strain ATCC 14580 / DSM 13 / JCM 2505 / CCUG 7422 / NBRC 12200 / NCIMB 9375 / NCTC 10341 / NRRL NRS-1264 / Gibson 46).